A 120-amino-acid chain; its full sequence is Small ribosomal subunit protein uS13 (120 aa).

The disordered stretch occupies residues 96-120 (PCRGQRTRTNARTRKGPRKAIAGKK).

It belongs to the universal ribosomal protein uS13 family. In terms of assembly, part of the 30S ribosomal subunit. Forms a loose heterodimer with protein S19. Forms two bridges to the 50S subunit in the 70S ribosome.

Functionally, located at the top of the head of the 30S subunit, it contacts several helices of the 16S rRNA. In the 70S ribosome it contacts the 23S rRNA (bridge B1a) and protein L5 of the 50S subunit (bridge B1b), connecting the 2 subunits; these bridges are implicated in subunit movement. Contacts the tRNAs in the A and P-sites. The chain is Small ribosomal subunit protein uS13 from Chromobacterium violaceum (strain ATCC 12472 / DSM 30191 / JCM 1249 / CCUG 213 / NBRC 12614 / NCIMB 9131 / NCTC 9757 / MK).